The chain runs to 127 residues: Small ribosomal subunit protein uS12 (127 aa).

3-methylthioaspartic acid is present on D89.

The protein belongs to the universal ribosomal protein uS12 family. Part of the 30S ribosomal subunit. Contacts proteins S8 and S17. May interact with IF1 in the 30S initiation complex.

In terms of biological role, with S4 and S5 plays an important role in translational accuracy. Functionally, interacts with and stabilizes bases of the 16S rRNA that are involved in tRNA selection in the A site and with the mRNA backbone. Located at the interface of the 30S and 50S subunits, it traverses the body of the 30S subunit contacting proteins on the other side and probably holding the rRNA structure together. The combined cluster of proteins S8, S12 and S17 appears to hold together the shoulder and platform of the 30S subunit. The sequence is that of Small ribosomal subunit protein uS12 from Nautilia profundicola (strain ATCC BAA-1463 / DSM 18972 / AmH).